The primary structure comprises 203 residues: ATP-dependent dethiobiotin synthetase BioD (203 aa).

Residue 11–16 (NVGKTI) participates in ATP binding. Thr15 serves as a coordination point for Mg(2+). The active site involves Lys31. Residue Thr35 coordinates substrate. ATP is bound by residues Asp42 and 94 to 97 (EGAG). Positions 42 and 94 each coordinate Mg(2+).

The protein belongs to the dethiobiotin synthetase family. As to quaternary structure, homodimer. Mg(2+) is required as a cofactor.

Its subcellular location is the cytoplasm. It carries out the reaction (7R,8S)-7,8-diammoniononanoate + CO2 + ATP = (4R,5S)-dethiobiotin + ADP + phosphate + 3 H(+). It functions in the pathway cofactor biosynthesis; biotin biosynthesis; biotin from 7,8-diaminononanoate: step 1/2. Its function is as follows. Catalyzes a mechanistically unusual reaction, the ATP-dependent insertion of CO2 between the N7 and N8 nitrogen atoms of 7,8-diaminopelargonic acid (DAPA, also called 7,8-diammoniononanoate) to form a ureido ring. This is ATP-dependent dethiobiotin synthetase BioD from Lawsonia intracellularis (strain PHE/MN1-00).